A 377-amino-acid chain; its full sequence is Glutamate 5-kinase (377 aa).

Lys-17 provides a ligand contact to ATP. The substrate site is built by Ser-56, Asp-143, and Asn-155. Ser-217–Lys-223 contacts ATP. The PUA domain occupies Ala-282 to Cys-360.

Belongs to the glutamate 5-kinase family.

It is found in the cytoplasm. It carries out the reaction L-glutamate + ATP = L-glutamyl 5-phosphate + ADP. It functions in the pathway amino-acid biosynthesis; L-proline biosynthesis; L-glutamate 5-semialdehyde from L-glutamate: step 1/2. Functionally, catalyzes the transfer of a phosphate group to glutamate to form L-glutamate 5-phosphate. This is Glutamate 5-kinase from Maridesulfovibrio salexigens (strain ATCC 14822 / DSM 2638 / NCIMB 8403 / VKM B-1763) (Desulfovibrio salexigens).